Consider the following 340-residue polypeptide: DNA-directed RNA polymerase subunit alpha (340 aa).

The interval 1 to 233 (MVREEVAVST…DLFIPFLHAE (233 aa)) is alpha N-terminal domain (alpha-NTD). An alpha C-terminal domain (alpha-CTD) region spans residues 266–340 (KKEIALKCIF…GIDLPKNKRF (75 aa)).

It belongs to the RNA polymerase alpha chain family. As to quaternary structure, in plastids the minimal PEP RNA polymerase catalytic core is composed of four subunits: alpha, beta, beta', and beta''. When a (nuclear-encoded) sigma factor is associated with the core the holoenzyme is formed, which can initiate transcription.

It localises to the plastid. Its subcellular location is the chloroplast. It carries out the reaction RNA(n) + a ribonucleoside 5'-triphosphate = RNA(n+1) + diphosphate. DNA-dependent RNA polymerase catalyzes the transcription of DNA into RNA using the four ribonucleoside triphosphates as substrates. This Calycanthus floridus var. glaucus (Eastern sweetshrub) protein is DNA-directed RNA polymerase subunit alpha.